Consider the following 108-residue polypeptide: MPLTPPPNYTGLYIAAALGVSLAAVVALFTRSTLPIVGDSQHNLPHGGRYRDGTKAIDYFKPTKLNSVEPGNYWYTQPWLLVILLVALICLSGRHAQCCPRCNRVHSA.

Residues 1–8 (MPLTPPPN) are Cytoplasmic-facing. A helical transmembrane segment spans residues 9 to 29 (YTGLYIAAALGVSLAAVVALF). At 30–72 (TRSTLPIVGDSQHNLPHGGRYRDGTKAIDYFKPTKLNSVEPGN) the chain is on the lumenal side. The helical transmembrane segment at 73–93 (YWYTQPWLLVILLVALICLSG) threads the bilayer. Residues 94–108 (RHAQCCPRCNRVHSA) lie on the Cytoplasmic side of the membrane.

This sequence belongs to the Tymovirales TGBp2 protein family.

Its subcellular location is the host endoplasmic reticulum membrane. In terms of biological role, plays a role in viral cell-to-cell propagation, by facilitating genome transport to neighboring plant cells through plasmosdesmata,. This chain is Movement protein TGB2, found in Solanum tuberosum (Potato).